A 335-amino-acid chain; its full sequence is uncharacterized protein (335 aa).

Belongs to the glycosyltransferase group 1 family. Glycosyltransferase 4 subfamily.

This is an uncharacterized protein from Sulfolobus islandicus rod-shaped virus 1 (SIRV-1).